The sequence spans 349 residues: DNA polymerase IV (349 aa).

In terms of domain architecture, UmuC spans 4–185 (IIHIDCDCFY…LPVAKLHGVG (182 aa)). Mg(2+)-binding residues include Asp-8 and Asp-103. Residue Glu-104 is part of the active site.

The protein belongs to the DNA polymerase type-Y family. In terms of assembly, monomer. Mg(2+) is required as a cofactor.

It localises to the cytoplasm. It catalyses the reaction DNA(n) + a 2'-deoxyribonucleoside 5'-triphosphate = DNA(n+1) + diphosphate. In terms of biological role, poorly processive, error-prone DNA polymerase involved in untargeted mutagenesis. Copies undamaged DNA at stalled replication forks, which arise in vivo from mismatched or misaligned primer ends. These misaligned primers can be extended by PolIV. Exhibits no 3'-5' exonuclease (proofreading) activity. May be involved in translesional synthesis, in conjunction with the beta clamp from PolIII. The polypeptide is DNA polymerase IV (Pseudomonas paraeruginosa (strain DSM 24068 / PA7) (Pseudomonas aeruginosa (strain PA7))).